Reading from the N-terminus, the 272-residue chain is Tryptophan synthase alpha chain (272 aa).

Residues E49 and E60 each act as proton acceptor in the active site.

It belongs to the TrpA family. As to quaternary structure, tetramer of two alpha and two beta chains.

It catalyses the reaction (1S,2R)-1-C-(indol-3-yl)glycerol 3-phosphate + L-serine = D-glyceraldehyde 3-phosphate + L-tryptophan + H2O. The protein operates within amino-acid biosynthesis; L-tryptophan biosynthesis; L-tryptophan from chorismate: step 5/5. Functionally, the alpha subunit is responsible for the aldol cleavage of indoleglycerol phosphate to indole and glyceraldehyde 3-phosphate. This is Tryptophan synthase alpha chain from Legionella pneumophila (strain Paris).